A 91-amino-acid chain; its full sequence is Bacterial microcompartment shell protein PduJ (91 aa).

Positions Ala4–Pro88 constitute a BMC domain.

This sequence belongs to the bacterial microcompartments protein family. As to quaternary structure, homohexamer with a central pore of about 5.7 Angstroms in diameter. Interacts with PduP, which targets PduP to the BMC.

It localises to the bacterial microcompartment. It functions in the pathway polyol metabolism; 1,2-propanediol degradation. One of the major shell proteins of the bacterial microcompartment (BMC) dedicated to 1,2-propanediol (1,2-PD) degradation. The isolated BMC shell component protein ratio for J:A:B':B:K:T:U is approximately 15:10:7:6:1:1:2. At least one of PduA or PduJ is required for BMC assembly; it must be encoded as the first gene in the pdu operon. Required for structural integrity of BMCs and to mitigate propionaldehyde toxicity, probably joins facets responsible for BMC closure. Edge residues (particularly Lys-25) are important for function and assembly of the BMC. 80% identical to PduA; although their pore regions appear structurally identical, unlike PduA plays no role in 1,2-PD diffusion into or out of the BMC shell. If pduJ is cloned in the chromosomal position of pduA it is able to complement a pduA deletion; it then has a functional pore as it assumes the transport functions of PduA. Overexpression of this protein leads to aberrant filaments that extend the length of the cell, cross the cleavage furrow and impair division. The filaments form nanotubes with a hollow center. Modeling suggests PduJ is probably the hub for binding multiple enzymes to the interior of the BMC; modeling suggests PduC, PduD, PduG and PduM are targeted to PduJ. Functionally, the 1,2-propanediol (1,2-PD) degradation bacterial microcompartment (BMC) concentrates low levels of 1,2-PD catabolic enzymes, concentrates volatile reaction intermediates thus enhancing pathway flux and keeps the level of toxic, mutagenic propionaldehyde low. The polypeptide is Bacterial microcompartment shell protein PduJ (Salmonella typhimurium (strain LT2 / SGSC1412 / ATCC 700720)).